The chain runs to 665 residues: Anaphase-promoting complex subunit 3 (665 aa).

The TPR 1 repeat unit spans residues 115–148; it reads SCMLDVLGTMYKKAGFLKKATDCFVEAVSINPYN. The DNA-binding element occupies 191-257; it reads VPEPSFLKKS…HQSLKLQSQS (67 aa). 8 TPR repeats span residues 329 to 362, 363 to 396, 431 to 464, 466 to 498, 499 to 532, 534 to 566, 568 to 600, and 601 to 634; these read LLKL…QQNT, PFVL…SPSR, PESW…DPTF, YAYT…NVRH, YNAW…NPNN, VLIT…DEKS, LARF…APDE, and ANVH…DGKA.

The protein belongs to the APC3/CDC27 family. In terms of assembly, the APC/C is composed of at least 13 subunits: apc1, apc2, nuc2, apc4, apc5, cut9, apc8, apc10, apc11, hcn1, apc13, apc14 and apc15. Interacts with apc10 and cut9.

Its subcellular location is the nucleus. Functionally, component of the anaphase-promoting complex/cyclosome (APC/C), a cell cycle-regulated E3 ubiquitin-protein ligase complex that controls progression through mitosis and the G1 phase of the cell cycle. The APC/C is thought to confer substrate specificity and, in the presence of ubiquitin-conjugating E2 enzymes, it catalyzes the formation of protein-ubiquitin conjugates that are subsequently degraded by the 26S proteasome. Interacts with spindle apparatus, chromosomes, or nuclear envelope, and interconnect nuclear and cytoskeletal functions in mitosis, so the elongation of the spindle in anaphase is blocked. This chain is Anaphase-promoting complex subunit 3 (nuc2), found in Schizosaccharomyces pombe (strain 972 / ATCC 24843) (Fission yeast).